A 274-amino-acid polypeptide reads, in one-letter code: 26S proteasome regulatory subunit RPN12 (274 aa).

The PCI domain maps to 76-251 (DSFENYFNQL…KADYEDEMMH (176 aa)).

Belongs to the proteasome subunit S14 family.

Acts as a regulatory subunit of the 26S proteasome which is involved in the ATP-dependent degradation of ubiquitinated proteins. Necessary for activation of the CDC28 kinase. The chain is 26S proteasome regulatory subunit RPN12 (RPN12) from Saccharomyces cerevisiae (strain ATCC 204508 / S288c) (Baker's yeast).